The following is a 720-amino-acid chain: Transcription factor bHLH155 (720 aa).

A compositionally biased stretch (polar residues) spans 522–534 (YPSSSSDQFQTSL). Residues 522–558 (YPSSSSDQFQTSLDIPKKNKKRAKPGESSRPRPRDRQ) are disordered. The Nuclear localization signal signature appears at 540–547 (NKKRAKPG). Residues 544–593 (AKPGESSRPRPRDRQLIQDRIKELRELVPNGSKCSIDSLLERTIKHMLFL) enclose the bHLH domain. Basic and acidic residues predominate over residues 545-558 (KPGESSRPRPRDRQ).

The protein belongs to the bHLH protein family. LHW subfamily. In terms of assembly, homodimer.

It localises to the nucleus. Transcription factor that may regulate root development. The sequence is that of Transcription factor bHLH155 (BHLH155) from Arabidopsis thaliana (Mouse-ear cress).